A 72-amino-acid chain; its full sequence is Osmotically-inducible lipoprotein B (72 aa).

The first 23 residues, 1 to 23, serve as a signal peptide directing secretion; sequence MFVTSKKMTAAVLAITLAMSLSA. Cys-24 carries N-palmitoyl cysteine lipidation. Cys-24 is lipidated: S-diacylglycerol cysteine.

It localises to the cell membrane. Functionally, provides resistance to osmotic stress. May be important for stationary-phase survival. This is Osmotically-inducible lipoprotein B (osmB) from Escherichia coli O157:H7.